Consider the following 237-residue polypeptide: Ribonuclease PH (237 aa).

Residues Arg-86 and 124-126 (GTR) each bind phosphate.

This sequence belongs to the RNase PH family. Homohexameric ring arranged as a trimer of dimers.

It carries out the reaction tRNA(n+1) + phosphate = tRNA(n) + a ribonucleoside 5'-diphosphate. Functionally, phosphorolytic 3'-5' exoribonuclease that plays an important role in tRNA 3'-end maturation. Removes nucleotide residues following the 3'-CCA terminus of tRNAs; can also add nucleotides to the ends of RNA molecules by using nucleoside diphosphates as substrates, but this may not be physiologically important. Probably plays a role in initiation of 16S rRNA degradation (leading to ribosome degradation) during starvation. This chain is Ribonuclease PH, found in Bradyrhizobium sp. (strain BTAi1 / ATCC BAA-1182).